The primary structure comprises 296 residues: Polyamine aminopropyltransferase (296 aa).

Positions E5–Q238 constitute a PABS domain. Position 33 (Q33) interacts with S-methyl-5'-thioadenosine. H64 and D88 together coordinate spermidine. Residues E108 and D140–G141 contribute to the S-methyl-5'-thioadenosine site. D158 acts as the Proton acceptor in catalysis. D158–D161 is a spermidine binding site. P165 contributes to the S-methyl-5'-thioadenosine binding site.

Belongs to the spermidine/spermine synthase family. As to quaternary structure, homodimer or homotetramer.

It is found in the cytoplasm. The catalysed reaction is S-adenosyl 3-(methylsulfanyl)propylamine + putrescine = S-methyl-5'-thioadenosine + spermidine + H(+). It functions in the pathway amine and polyamine biosynthesis; spermidine biosynthesis; spermidine from putrescine: step 1/1. Its function is as follows. Catalyzes the irreversible transfer of a propylamine group from the amino donor S-adenosylmethioninamine (decarboxy-AdoMet) to putrescine (1,4-diaminobutane) to yield spermidine. This is Polyamine aminopropyltransferase from Yersinia pestis bv. Antiqua (strain Antiqua).